We begin with the raw amino-acid sequence, 283 residues long: Probable endonuclease 4 (283 aa).

Zn(2+)-binding residues include His-69, His-109, Glu-145, Asp-179, His-182, His-216, Asp-229, His-231, and Glu-261.

The protein belongs to the AP endonuclease 2 family. It depends on Zn(2+) as a cofactor.

The catalysed reaction is Endonucleolytic cleavage to 5'-phosphooligonucleotide end-products.. Functionally, endonuclease IV plays a role in DNA repair. It cleaves phosphodiester bonds at apurinic or apyrimidinic (AP) sites, generating a 3'-hydroxyl group and a 5'-terminal sugar phosphate. The chain is Probable endonuclease 4 from Desulfosudis oleivorans (strain DSM 6200 / JCM 39069 / Hxd3) (Desulfococcus oleovorans).